A 300-amino-acid polypeptide reads, in one-letter code: Vetispiradiene synthase 2 (300 aa).

Mg(2+) is bound by residues Asp54, Asp58, Asp197, Thr201, and Glu205. A DDXXD motif motif is present at residues 54–58 (DDTFD).

The protein belongs to the terpene synthase family. Tpsa subfamily. Mg(2+) is required as a cofactor.

The protein localises to the cytoplasm. The catalysed reaction is (2E,6E)-farnesyl diphosphate = (-)-vetispiradiene + diphosphate. Its pathway is secondary metabolite biosynthesis; terpenoid biosynthesis. Sesquiterpene synthase that catalyzes the formation of vetispiradiene from trans,trans-farnesyl diphosphate. The initial internal cyclization produces the monocyclic intermediate germacrene A. The polypeptide is Vetispiradiene synthase 2 (Hyoscyamus muticus (Egyptian henbane)).